The following is a 220-amino-acid chain: Small ribosomal subunit protein uS2 (220 aa).

It belongs to the universal ribosomal protein uS2 family.

This Methanococcus maripaludis (strain C5 / ATCC BAA-1333) protein is Small ribosomal subunit protein uS2.